Reading from the N-terminus, the 932-residue chain is Protocadherin gamma-A6 (932 aa).

Residues 1 to 29 form the signal peptide; that stretch reads MAPPQRHPQRSEQVLLLTLLGTLWGAAAA. 6 Cadherin domains span residues 30 to 133, 134 to 242, 243 to 347, 348 to 452, 453 to 562, and 570 to 682; these read QIRY…TPRF, LKEE…TPVF, TQPV…VPEV, VVTS…PPTF, PHSS…APEI, and DGST…EPSA. The Extracellular portion of the chain corresponds to 30–692; the sequence is QIRYSIPEEL…KPNDSDLTLY (663 aa). Asparagine 81 carries an N-linked (GlcNAc...) asparagine glycan. 2 N-linked (GlcNAc...) asparagine glycosylation sites follow: asparagine 419 and asparagine 545. Asparagine 685 carries N-linked (GlcNAc...) asparagine glycosylation. The chain crosses the membrane as a helical span at residues 693 to 713; the sequence is LVVAVAAVSCVFLAFVIVLLA. The Cytoplasmic segment spans residues 714–932; sequence LRLQRWHKSR…KKKSGKKEKK (219 aa). 2 disordered regions span residues 803-841 and 902-932; these read DPRQLQQAPPNTDWRFSQAQRPGTSGSQNGDDTGTWPNN and ATLTNAAGKRDGKAPAGGNGNKKKSGKKEKK. The segment covering 806–841 has biased composition (polar residues); the sequence is QLQQAPPNTDWRFSQAQRPGTSGSQNGDDTGTWPNN. The segment covering 922-932 has biased composition (basic residues); that stretch reads NKKKSGKKEKK.

The protein localises to the cell membrane. Its function is as follows. Potential calcium-dependent cell-adhesion protein. May be involved in the establishment and maintenance of specific neuronal connections in the brain. This chain is Protocadherin gamma-A6 (PCDHGA6), found in Pan troglodytes (Chimpanzee).